The following is a 382-amino-acid chain: Putative 12-oxophytodienoate reductase 3 (382 aa).

FMN-binding positions include 37-39, Ala-70, and Gln-112; that span reads PLT. Positions 120–138 are enriched in polar residues; it reads STNDQQPNGQAPISSTDKQ. The tract at residues 120–147 is disordered; sequence STNDQQPNGQAPISSTDKQITPDDSHTV. Residue 184–187 coordinates substrate; it reads HGAH. The Proton donor role is filled by Tyr-189. Arg-236 serves as a coordination point for FMN. Residue Arg-277 coordinates substrate. FMN is bound by residues Gly-307 and 328 to 329; that span reads GR.

It belongs to the NADH:flavin oxidoreductase/NADH oxidase family. It depends on FMN as a cofactor.

In terms of biological role, putative oxophytodienoate reductase that may be involved in the biosynthesis or metabolism of oxylipin signaling molecules. This is Putative 12-oxophytodienoate reductase 3 (OPR3) from Oryza sativa subsp. japonica (Rice).